A 191-amino-acid chain; its full sequence is Cell division protein SepF (191 aa).

Over residues 151–164 the composition is skewed to low complexity; that stretch reads SSSPEEASPSSVST. Positions 151 to 191 are disordered; that stretch reads SSSPEEASPSSVSTEKTPQYSLGKNTTPEPAWGNSKLSAYS. Residues 165-178 are compositionally biased toward polar residues; it reads EKTPQYSLGKNTTP.

Belongs to the SepF family. As to quaternary structure, homodimer. Interacts with FtsZ.

Its subcellular location is the cytoplasm. Cell division protein that is part of the divisome complex and is recruited early to the Z-ring. Probably stimulates Z-ring formation, perhaps through the cross-linking of FtsZ protofilaments. Its function overlaps with FtsA. This Prochlorococcus marinus (strain MIT 9301) protein is Cell division protein SepF.